An 864-amino-acid polypeptide reads, in one-letter code: MTRQLSSDGRMFASSIITVIPDSSPTAAEAIELSSPLSLPSPTSLLDFLSTSTSRGPARSDTDGDKTQGKEVLDTRPILENSFRRENRVVSGTGGKAATGKKLKRRTESPGNACQSEIHIVPGERIILRQTRPDKKAAKTKRTKKEDGLMNRKLYGRVSKANQTVSLQPETKKSAPKGCNDTTQPAENGHINDLDDGLQLEQAIQRRLDWTPTKDTTIPVIDLVGDSPSSCEKSLSGMRSTRTMLSNYEFSGIVGTLGGSRSEGTPDAPTTKRPVELLKVNNLKEISGLSDSRQSSITEDSESATSKPRRVKAKNPPKSKLTTITSYATAKYTVVEKSVDLDPVETLLSDEPGKEKNVAKRTSGARYAKPGRKKSATTEKKNEPPIFKVVPPLEAFKAFDGQELLFGTSSQLANGHSEDQHEQNEGTSHISNSSAFIPLSRSESSSKAPSQTSLGSGFLKLSSSKNLWSAGARDLTGAVLEIDEIDLSEHWMKPSIFESQPKAPLGCKADTQIPPQLGEIDFDNSCQKPLAAIDPPELVTQSETPSEKGDLHKYIVKPTHINSCSQSGSSISVGSPEKPVQDKPIFSGFTTSELAKKVAAYGFKPIKSRDKMIALLEKCWENRNKTSNSVPKLTPGDRLSQVDESTQGQSLGPHLKPNSIPQTATTQVPKVKPDKRDTKSQGVPVPSRRSTSTSKVSRKRTESPSAILVDDDQRSDSTGDSVPPSRPRRPSKSCTPRDRQKTPESFNLPTTPLTIRSGKIPSTGTASETLPSLSTQITAAIKAQPRLRAFNGVKQPTWYEKILMYDPIQLEDLAVWLNTDGFERIGEDREVCPGLVREWCESKGVCCIWRKQRGVRAHCPLVRA.

Over residues 35–54 the composition is skewed to low complexity; the sequence is SPLSLPSPTSLLDFLSTSTS. Disordered stretches follow at residues 35–72, 89–113, 160–193, 288–318, 348–382, 413–432, and 625–771; these read SPLS…GKEV, VVSG…PGNA, KANQ…HIND, GLSD…NPPK, LSDE…EKKN, ANGH…HISN, and KTSN…ETLP. The span at 58–72 shows a compositional bias: basic and acidic residues; that stretch reads ARSDTDGDKTQGKEV. Polar residues-rich tracts occupy residues 160–169 and 289–306; these read KANQTVSLQP and LSDS…SATS. The segment covering 307–317 has biased composition (basic residues); that stretch reads KPRRVKAKNPP. The segment covering 659-668 has biased composition (polar residues); it reads SIPQTATTQV. Residues 683 to 695 show a composition bias toward low complexity; the sequence is VPVPSRRSTSTSK. Polar residues predominate over residues 743–771; it reads PESFNLPTTPLTIRSGKIPSTGTASETLP.

The protein belongs to the SLX4 family. As to quaternary structure, forms a heterodimer with SLX1. Phosphorylated in response to DNA damage.

The protein localises to the nucleus. Regulatory subunit of the SLX1-SLX4 structure-specific endonuclease that resolves DNA secondary structures generated during DNA repair and recombination. Has endonuclease activity towards branched DNA substrates, introducing single-strand cuts in duplex DNA close to junctions with ss-DNA. The polypeptide is Structure-specific endonuclease subunit SLX4 (Paracoccidioides brasiliensis (strain Pb03)).